The primary structure comprises 539 residues: Glutathione synthetase, chloroplastic (539 aa).

The transit peptide at 1-61 (MGSGCSSLSY…SPLRCGRSFK (61 aa)) directs the protein to the chloroplast. Arginine 193 contacts substrate. Glutamate 209 provides a ligand contact to ATP. Positions 209 and 211 each coordinate Mg(2+). Substrate-binding positions include 213-216 (ISCS), 281-283 (ERN), glutamine 287, and 335-338 (RSGY). Residues lysine 374, 428 to 437 (KPQREGGGNN), tyrosine 439, 464 to 467 (MQRI), and glutamate 490 each bind ATP. Mg(2+) is bound at residue glutamate 432. Arginine 515 contributes to the substrate binding site. 2 residues coordinate ATP: lysine 517 and glutamate 523. 526 to 527 (VA) contacts substrate.

The protein belongs to the eukaryotic GSH synthase family. Homodimer. Requires Mg(2+) as cofactor.

Its subcellular location is the plastid. It localises to the chloroplast. The enzyme catalyses gamma-L-glutamyl-L-cysteine + glycine + ATP = glutathione + ADP + phosphate + H(+). It functions in the pathway sulfur metabolism; glutathione biosynthesis; glutathione from L-cysteine and L-glutamate: step 2/2. The chain is Glutathione synthetase, chloroplastic (GSH2) from Arabidopsis thaliana (Mouse-ear cress).